A 293-amino-acid chain; its full sequence is Proline iminopeptidase (293 aa).

Serine 105 acts as the Nucleophile in catalysis. Aspartate 244 is an active-site residue. The active-site Proton donor is histidine 271.

Belongs to the peptidase S33 family. Part of the tricorn proteolytic complex.

It carries out the reaction Release of N-terminal proline from a peptide.. Its function is as follows. Cleaves H-Pro-AMC as well as a wide spectrum of amino acid substrates and several peptide substrates without a proline at the N-terminus. Proteases F1, F2 and F3 degrade oligopeptides produced by Tricorn (themselves probably produced by the proteasome) yielding free amino acids. In Thermoplasma acidophilum (strain ATCC 25905 / DSM 1728 / JCM 9062 / NBRC 15155 / AMRC-C165), this protein is Proline iminopeptidase (pip).